The sequence spans 276 residues: Probable transposase for insertion sequence element IS702 (276 aa).

The DDE Tnp4 domain occupies 118–256 (MDVTESPIER…SNQYRNRHRR (139 aa)). D119, D170, D190, and E234 together coordinate a divalent metal cation.

This sequence belongs to the transposase 11 family. A divalent metal cation is required as a cofactor.

In terms of biological role, involved in the transposition of the insertion sequence. The sequence is that of Probable transposase for insertion sequence element IS702 from Microchaete diplosiphon (Fremyella diplosiphon).